Reading from the N-terminus, the 412-residue chain is Multifunctional CCA protein (412 aa).

ATP-binding residues include glycine 8 and arginine 11. Glycine 8 and arginine 11 together coordinate CTP. Glutamate 21 and aspartate 23 together coordinate Mg(2+). Residues arginine 92, arginine 138, and arginine 141 each contribute to the ATP site. Residues arginine 92, arginine 138, and arginine 141 each contribute to the CTP site. Residues 227–328 enclose the HD domain; that stretch reads TGIHTMMTVA…IKLFYAIDVW (102 aa).

Belongs to the tRNA nucleotidyltransferase/poly(A) polymerase family. Bacterial CCA-adding enzyme type 1 subfamily. In terms of assembly, monomer. Can also form homodimers and oligomers. Requires Mg(2+) as cofactor. Ni(2+) serves as cofactor.

It carries out the reaction a tRNA precursor + 2 CTP + ATP = a tRNA with a 3' CCA end + 3 diphosphate. The catalysed reaction is a tRNA with a 3' CCA end + 2 CTP + ATP = a tRNA with a 3' CCACCA end + 3 diphosphate. Its function is as follows. Catalyzes the addition and repair of the essential 3'-terminal CCA sequence in tRNAs without using a nucleic acid template. Adds these three nucleotides in the order of C, C, and A to the tRNA nucleotide-73, using CTP and ATP as substrates and producing inorganic pyrophosphate. tRNA 3'-terminal CCA addition is required both for tRNA processing and repair. Also involved in tRNA surveillance by mediating tandem CCA addition to generate a CCACCA at the 3' terminus of unstable tRNAs. While stable tRNAs receive only 3'-terminal CCA, unstable tRNAs are marked with CCACCA and rapidly degraded. The chain is Multifunctional CCA protein from Baumannia cicadellinicola subsp. Homalodisca coagulata.